The sequence spans 966 residues: Catenin alpha-2 (966 aa).

Over residues 924–940 (PEKKPLVKREKPEEYQT) the composition is skewed to basic and acidic residues. A disordered region spans residues 924 to 952 (PEKKPLVKREKPEEYQTRVRRGSQKKHIS). The span at 941–951 (RVRRGSQKKHI) shows a compositional bias: basic residues.

It belongs to the vinculin/alpha-catenin family.

It is found in the cell membrane. Its subcellular location is the cytoplasm. It localises to the cytoskeleton. The protein localises to the cell junction. The protein resides in the adherens junction. It is found in the cell projection. Its subcellular location is the axon. It localises to the nucleus. May function as a linker between cadherin adhesion receptors and the cytoskeleton to regulate cell-cell adhesion and differentiation in the nervous system. The protein is Catenin alpha-2 (ctnna2) of Xenopus laevis (African clawed frog).